We begin with the raw amino-acid sequence, 362 residues long: Probable choline-phosphate cytidylyltransferase (362 aa).

Basic and acidic residues predominate over residues M1–F37. The segment at M1–D79 is disordered. Residues V109–H117 and K147 each bind CTP. Substrate contacts are provided by K147 and W176. CTP contacts are provided by residues H193–D194, Y198, and R221–V225. Residues K308–H362 are disordered. Composition is skewed to low complexity over residues G313–T323 and A351–H362. Phosphoserine is present on residues S315 and S319. T323 bears the Phosphothreonine mark. S355 bears the Phosphoserine mark.

The protein belongs to the cytidylyltransferase family.

It localises to the nucleus. The enzyme catalyses phosphocholine + CTP + H(+) = CDP-choline + diphosphate. The protein is Probable choline-phosphate cytidylyltransferase of Schizosaccharomyces pombe (strain 972 / ATCC 24843) (Fission yeast).